The chain runs to 103 residues: Cyanovirin-N homolog (103 aa).

Belongs to the cyanovirin-N family.

Functionally, mannose-binding lectin. The sequence is that of Cyanovirin-N homolog from Tuber borchii (White truffle).